The sequence spans 145 residues: Lipoprotein signal peptidase (145 aa).

A run of 2 helical transmembrane segments spans residues L57–L77 and E79–I99. Catalysis depends on residues D109 and D124. Residues F120–F140 traverse the membrane as a helical segment.

The protein belongs to the peptidase A8 family.

The protein resides in the cell membrane. The catalysed reaction is Release of signal peptides from bacterial membrane prolipoproteins. Hydrolyzes -Xaa-Yaa-Zaa-|-(S,diacylglyceryl)Cys-, in which Xaa is hydrophobic (preferably Leu), and Yaa (Ala or Ser) and Zaa (Gly or Ala) have small, neutral side chains.. It participates in protein modification; lipoprotein biosynthesis (signal peptide cleavage). Its function is as follows. This protein specifically catalyzes the removal of signal peptides from prolipoproteins. In Caldanaerobacter subterraneus subsp. tengcongensis (strain DSM 15242 / JCM 11007 / NBRC 100824 / MB4) (Thermoanaerobacter tengcongensis), this protein is Lipoprotein signal peptidase.